The primary structure comprises 194 residues: dCTP deaminase (194 aa).

Residues 110–115 (RSSLAR), D128, 136–138 (VLE), Y171, K178, and Q182 contribute to the dCTP site. E138 (proton donor/acceptor) is an active-site residue. Residues 171–194 (YNKRKNAKYKDQQEAVASRISQDS) form a disordered region.

Belongs to the dCTP deaminase family. Homotrimer.

It catalyses the reaction dCTP + H2O + H(+) = dUTP + NH4(+). Its pathway is pyrimidine metabolism; dUMP biosynthesis; dUMP from dCTP (dUTP route): step 1/2. Catalyzes the deamination of dCTP to dUTP. The sequence is that of dCTP deaminase from Shewanella amazonensis (strain ATCC BAA-1098 / SB2B).